A 332-amino-acid chain; its full sequence is MDPRSEVLLRQRHLFATPLLLAGLPADDLLAELPQAQGWSWHAGEQAQLDARFPDRSRFDTRAPTGAWTSAVLFLPKSRELTDYLLASLAARLPGGELFLVGEKRGGIERASKQLAAYGKPRKLDSARHCQLWQVRIEQAPAEPDLHALAQRYSLPLADGELQVVSLPGVFSHGRLDRGSALLLGQLQALPGGHLLDFGCGAGVLGAVLKRRYPASRLTLLDVDAFAVESSRLTLAANGLDGEVIAADGIDGAPRELAAIVSNPPFHQGVHTDYQASERLLQRAAEHLAPGGELRLVANSFLKYPPLIERHLGPCRTLAEGDGFRIYSARRS.

It belongs to the methyltransferase superfamily. RsmC family. In terms of assembly, monomer.

It is found in the cytoplasm. The enzyme catalyses guanosine(1207) in 16S rRNA + S-adenosyl-L-methionine = N(2)-methylguanosine(1207) in 16S rRNA + S-adenosyl-L-homocysteine + H(+). In terms of biological role, specifically methylates the guanine in position 1207 of 16S rRNA in the 30S particle. The sequence is that of Ribosomal RNA small subunit methyltransferase C from Pseudomonas aeruginosa (strain UCBPP-PA14).